The chain runs to 601 residues: Mitochondrial tRNA methylthiotransferase CDK5RAP1 (601 aa).

Residues 1–33 constitute a mitochondrion transit peptide; the sequence is MHPLQCVLQVQRSLGWGPLASVSWLSLRMCRAH. An MTTase N-terminal domain is found at 100–220; that stretch reads RKVYLETYGC…LPRLLAVAES (121 aa). [4Fe-4S] cluster is bound by residues cysteine 109, cysteine 145, cysteine 183, cysteine 258, cysteine 262, and cysteine 265. Residues 244–512 enclose the Radical SAM core domain; sequence SASATSAFVS…ITIFREEATK (269 aa). Residues 515–590 enclose the TRAM domain; sequence QTSVGCTQLV…SQTLRGHVLC (76 aa).

Belongs to the methylthiotransferase family. MiaB subfamily. As to quaternary structure, interacts with CDK5R1 (p35 form). CDK5RAP1, CDK5RAP2 and CDK5RAP3 show competitive binding to CDK5R1. Forms a complex with CDK5R1 and CDK5. [4Fe-4S] cluster serves as cofactor. In terms of tissue distribution, expressed in heart, brain, placenta, lung, liver, skeletal muscle, kidney and pancreas. Expressed in neurons of central nervous tissue. As to expression, mainly expressed in brain, placenta and testis. High expression in placenta and lung.

It localises to the mitochondrion. The enzyme catalyses N(6)-dimethylallyladenosine(37) in tRNA + (sulfur carrier)-SH + AH2 + 2 S-adenosyl-L-methionine = 2-methylsulfanyl-N(6)-dimethylallyladenosine(37) in tRNA + (sulfur carrier)-H + 5'-deoxyadenosine + L-methionine + A + S-adenosyl-L-homocysteine + 2 H(+). In terms of biological role, methylthiotransferase that catalyzes the conversion of N6-(dimethylallyl)adenosine (i(6)A) to 2-methylthio-N6-(dimethylallyl)adenosine (ms(2)i(6)A) at position 37 (adjacent to the 3'-end of the anticodon) of four mitochondrial DNA-encoded tRNAs (Ser(UCN), Phe, Tyr and Trp). Essential for efficient and highly accurate protein translation by the ribosome. Specifically inhibits CDK5 activation by CDK5R1. Essential for efficient mitochondrial protein synthesis and respiratory chain; shows pathological consequences in mitochondrial disease. The chain is Mitochondrial tRNA methylthiotransferase CDK5RAP1 from Homo sapiens (Human).